The chain runs to 505 residues: MAQIDFRKKINWHRRYRSPQGVKTEHEILRIFESDRGRIINSPAIRRLQQKTQVFPLERNAAVRTRLTHSMEVQQVGRYIAKEILSRMKELKLLEAYGLDELTGPFESIVEMSCLMHDIGNPPFGHFGEAAINDWFRQRLHPEDAESQPLTDDRCSVAALRLRDGEEPLNELRRKIRQDLCHFEGNAQGIRLVHTLMRMNLTWAQVGGILKYTRPAWWRGETPETHHYLMKKPGYYLSEEAYIARLRKELNLALYSRFPLTWIMEAADDISYCVADLEDAVEKRIFTVEQLYHHLHEAWGQHEKGSLFSLVVENAWEKSRSNSLSRSTEDQFFMYLRVNTLNKLVPYAAQRFIDNLPAIFAGTFNHALLEDASECSDLLKLYKNVAVKHVFSHPDVEQLELQGYRVISGLLEIYRPLLSLSLSDFTELVEKERVKRFPIESRLFHKLSTRHRLAYVEAVSKLPSDSPEFPLWEYYYRCRLLQDYISGMTDLYAWDEYRRLMAVEQ.

Positions 66-273 (RLTHSMEVQQ…MEAADDISYC (208 aa)) constitute an HD domain.

It belongs to the dGTPase family. Type 1 subfamily. In terms of assembly, homotetramer. Mg(2+) is required as a cofactor.

The catalysed reaction is dGTP + H2O = 2'-deoxyguanosine + triphosphate + H(+). In terms of biological role, dGTPase preferentially hydrolyzes dGTP over the other canonical NTPs. The chain is Deoxyguanosinetriphosphate triphosphohydrolase from Shigella boydii serotype 4 (strain Sb227).